A 234-amino-acid polypeptide reads, in one-letter code: DEAD-box ATP-dependent RNA helicase 3 (234 aa).

Residues 120–148 (LAVSRLGLPQKLVETLEKRGITKLFPIQR) carry the Q motif motif. Residues 151–234 (LVPALEGRDI…RTVCVYGGVS (84 aa)) enclose the Helicase ATP-binding domain. Residue 164–171 (AKTGTGKT) coordinates ATP.

This sequence belongs to the DEAD box helicase family. DDX21/DDX50 subfamily.

In Helianthus annuus (Common sunflower), this protein is DEAD-box ATP-dependent RNA helicase 3.